We begin with the raw amino-acid sequence, 878 residues long: von Willebrand factor A domain-containing protein DDB_G0267758 (878 aa).

Residues 36–169 (GLFLTENNKK…TVKITLTITS (134 aa)) enclose the VIT domain. In terms of domain architecture, VWFA spans 316–496 (EFIFLIDCSG…ISLKPMFSNI (181 aa)). The span at 595-623 (SSSSSSSSSSSSSSSSSSSSSSSSSSSSS) shows a compositional bias: low complexity. Disordered stretches follow at residues 595–638 (SSSS…HRLS) and 752–774 (SVKKSKKSETKEETTKTTSSKTK). Over residues 624–635 (TTTATTNQNQIH) the composition is skewed to polar residues.

The sequence is that of von Willebrand factor A domain-containing protein DDB_G0267758 from Dictyostelium discoideum (Social amoeba).